Here is a 66-residue protein sequence, read N- to C-terminus: Large ribosomal subunit protein bL35 (66 aa).

Composition is skewed to basic residues over residues 1–15 and 28–45; these read MPKL…KRFK and TKRH…RTRR. The tract at residues 1–49 is disordered; that stretch reads MPKLKTKSSAKKRFKVTASGRVMSAQSTKRHGMTKRSKRSLRTRRGIAQ.

This sequence belongs to the bacterial ribosomal protein bL35 family.

The chain is Large ribosomal subunit protein bL35 from Anaplasma marginale (strain Florida).